Reading from the N-terminus, the 240-residue chain is Nuclear receptor-interacting protein 3 (240 aa).

The chain is Nuclear receptor-interacting protein 3 (NRIP3) from Pongo abelii (Sumatran orangutan).